The following is a 571-amino-acid chain: MPQVTFNDVAIDFTHEEWGWLSSAQRDLYKDVMVQNYENLVSVAGLSVTKPYVITLLEDGKEPWMMEKKLSKGMIPDWESRWENKELSTKKDNYDEDSPQTVIIEKVVKQSYEFSNSKKNLEYIEKLEGKHGSQVDHFRPAILTSRESPTADSVYKYNIFRSTFHSKSTLSEPQKISAEGNSHKYDILKKNLPKKSVIKNEKVNGGKKLLNSNKSGAAFSQGKSLTLPQTCNREKIYTCSECGKAFGKQSILNRHWRIHTGEKPYECRECGKTFSHGSSLTRHLISHSGEKPYKCIECGKAFSHVSSLTNHQSTHTGEKPYECMNCGKSFSRVSHLIEHLRIHTQEKLYECRICGKAFIHRSSLIHHQKIHTGEKPYECRECGKAFCCSSHLTRHQRIHTMEKQYECNKCLKVFSSLSFLVQHQSIHTEEKPFECQKCRKSFNQLESLNMHLRNHIRLKPYECSICGKAFSHRSSLLQHHRIHTGEKPYECIKCGKTFSCSSNLTVHQRIHTGEKPYKCNECGKAFSKGSNLTAHQRVHNGEKPNSVVSVEKPLDYMNHYTCEKSYRRETV.

Residues 4–76 enclose the KRAB domain; it reads VTFNDVAIDF…EKKLSKGMIP (73 aa). Residues Lys-109 and Lys-126 each participate in a glycyl lysine isopeptide (Lys-Gly) (interchain with G-Cter in SUMO2) cross-link. 11 consecutive C2H2-type zinc fingers follow at residues 237–259, 265–287, 293–315, 321–343, 349–371, 377–399, 405–427, 433–455, 461–483, 489–511, and 517–539; these read YTCS…WRIH, YECR…LISH, YKCI…QSTH, YECM…LRIH, YECR…QKIH, YECR…QRIH, YECN…QSIH, FECQ…LRNH, YECS…HRIH, YECI…QRIH, and YKCN…QRVH.

Belongs to the krueppel C2H2-type zinc-finger protein family.

The protein resides in the nucleus. Functionally, may be involved in transcriptional regulation. This chain is Zinc finger protein 181 (ZNF181), found in Homo sapiens (Human).